A 690-amino-acid chain; its full sequence is Eukaryotic translation initiation factor 3 subunit B (690 aa).

Over residues 1–11 (MAKKKSEEHSG) the composition is skewed to basic and acidic residues. The segment at 1–36 (MAKKKSEEHSGADANDSDYQEEPNFEDPPGFVDNIS) is disordered. Acidic residues predominate over residues 15–25 (NDSDYQEEPNF). The 85-residue stretch at 57-141 (SVVVVDNIPK…HTFAVNLFTD (85 aa)) folds into the RRM domain. WD repeat units lie at residues 207-246 (TRER…KIQK), 293-331 (DGMS…LLDL), 334-369 (IKIP…TLME), 442-484 (EIRE…KPSL), and 530-575 (PDHF…IKRT). Residues 595 to 645 (EEKQKEIKKNLKKYYAAFEQKDRLRLTRASKELLEKRSQLRETFMEYRNKR) are a coiled coil.

The protein belongs to the eIF-3 subunit B family. In terms of assembly, component of the eukaryotic translation initiation factor 3 (eIF-3) complex. The eIF-3 complex interacts with pix. Interacts with mxt.

The protein localises to the cytoplasm. In terms of biological role, RNA-binding component of the eukaryotic translation initiation factor 3 (eIF-3) complex, which is involved in protein synthesis of a specialized repertoire of mRNAs and, together with other initiation factors, stimulates binding of mRNA and methionyl-tRNAi to the 40S ribosome. The eIF-3 complex specifically targets and initiates translation of a subset of mRNAs involved in cell proliferation. The chain is Eukaryotic translation initiation factor 3 subunit B from Drosophila yakuba (Fruit fly).